A 425-amino-acid polypeptide reads, in one-letter code: Cysteate synthase (425 aa).

At lysine 106 the chain carries N6-(pyridoxal phosphate)lysine. Residues asparagine 132 and threonine 382 each contribute to the pyridoxal 5'-phosphate site.

This sequence belongs to the threonine synthase family. Cysteate synthase subfamily. Homotrimer. It depends on pyridoxal 5'-phosphate as a cofactor.

It carries out the reaction O-phospho-L-serine + sulfite + H(+) = L-cysteate + phosphate. It participates in cofactor biosynthesis; coenzyme M biosynthesis. Specifically catalyzes the beta-elimination of phosphate from L-phosphoserine and the beta-addition of sulfite to the dehydroalanine intermediate to produce L-cysteate. The polypeptide is Cysteate synthase (Methanosphaerula palustris (strain ATCC BAA-1556 / DSM 19958 / E1-9c)).